Consider the following 349-residue polypeptide: Phosphoribosylformylglycinamidine cyclo-ligase (349 aa).

This sequence belongs to the AIR synthase family.

It localises to the cytoplasm. The enzyme catalyses 2-formamido-N(1)-(5-O-phospho-beta-D-ribosyl)acetamidine + ATP = 5-amino-1-(5-phospho-beta-D-ribosyl)imidazole + ADP + phosphate + H(+). It functions in the pathway purine metabolism; IMP biosynthesis via de novo pathway; 5-amino-1-(5-phospho-D-ribosyl)imidazole from N(2)-formyl-N(1)-(5-phospho-D-ribosyl)glycinamide: step 2/2. The sequence is that of Phosphoribosylformylglycinamidine cyclo-ligase from Bordetella petrii (strain ATCC BAA-461 / DSM 12804 / CCUG 43448).